The following is a 303-amino-acid chain: Ribosomal RNA small subunit methyltransferase H (303 aa).

Residues 36-38 (CGH), aspartate 55, phenylalanine 81, aspartate 101, and glutamine 108 contribute to the S-adenosyl-L-methionine site.

The protein belongs to the methyltransferase superfamily. RsmH family.

The protein resides in the cytoplasm. It carries out the reaction cytidine(1402) in 16S rRNA + S-adenosyl-L-methionine = N(4)-methylcytidine(1402) in 16S rRNA + S-adenosyl-L-homocysteine + H(+). Functionally, specifically methylates the N4 position of cytidine in position 1402 (C1402) of 16S rRNA. This Aster yellows witches'-broom phytoplasma (strain AYWB) protein is Ribosomal RNA small subunit methyltransferase H.